Here is a 576-residue protein sequence, read N- to C-terminus: Insulin-like growth factor 2 mRNA-binding protein 1 (576 aa).

RRM domains lie at 2-75 (NKLY…HSVP) and 81-156 (RKIQ…YIPD). A disordered region spans residues 158 to 189 (QSVQGPENGRRGGFGARGAPRQGSPVTAGAPV). KH domains are found at residues 195-260 (DIPL…CKMI) and 276-343 (EVPL…EQEI). At Tyr396 the chain carries Phosphotyrosine; by SRC. KH domains follow at residues 404 to 469 (QETV…QGRI) and 486 to 552 (KLET…QRKI).

Belongs to the RRM IMP/VICKZ family. In terms of assembly, can form homooligomers and heterooligomers with IGF2BP1 and IGF2BP3 in an RNA-dependent manner. Associates with the cytoskeleton, predominantly with actin filament bundles and occasionally with microtubules. In a heterologous system, interacts with ELAVL1, DHX9 and HNRNPU. In terms of processing, phosphorylated by SRC at Tyr-396. This residue is involved in ACTB mRNA binding, its phosphorylation impairs association with ACTB mRNA and hence abolishes translational repression. Phosphorylation occurs in close proximity to filopodia and in the growth cones of differentiated neuroglioblastoma cells. In terms of tissue distribution, expressed in neurons and embryonic fibroblasts (at protein level).

The protein resides in the nucleus. It is found in the cytoplasm. It localises to the perinuclear region. The protein localises to the P-body. Its subcellular location is the stress granule. The protein resides in the cell projection. It is found in the growth cone. It localises to the filopodium. The protein localises to the lamellipodium. RNA-binding factor that recruits target transcripts to cytoplasmic protein-RNA complexes (mRNPs). This transcript 'caging' into mRNPs allows mRNA transport and transient storage. It also modulates the rate and location at which target transcripts encounter the translational apparatus and shields them from endonuclease attacks or microRNA-mediated degradation. Preferentially binds to N6-methyladenosine (m6A)-containing mRNAs and increases their stability. Plays a direct role in the transport and translation of transcripts required for axonal regeneration in adult sensory neurons. Regulates localized beta-actin/ACTB mRNA translation in polarized cells, a crucial process for cell migration and neurite outgrowth. Co-transcriptionally associates with the ACTB mRNA in the nucleus. This binding involves by a conserved 54-nucleotide element in the ACTB mRNA 3'-UTR, known as the 'zipcode'. The ribonucleoparticle (RNP) thus formed is exported to the cytoplasm, binds to a motor protein and is transported along the cytoskeleton to the cell periphery. During transport, IGF2BP1 prevents beta-actin mRNA from being translated into protein. When the RNP complex reaches its destination near the plasma membrane, IGF2BP1 is phosphorylated by SRC. This releases the mRNA, allowing ribosomal 40S and 60S subunits to assemble and initiate ACTB protein synthesis. The monomeric ACTB protein then assembles into the subcortical actin cytoskeleton, which pushes the leading edge onwards. Binds MYC mRNA. Binding to MYC mRNA is enhanced by m6A-modification of the CRD. Promotes the directed movement of cells by fine-tuning intracellular signaling networks. Binds to MAPK4 3'-UTR and inhibits its translation. Interacts with PTEN transcript open reading frame (ORF) and prevents mRNA decay. This combined action on MAPK4 (down-regulation) and PTEN (up-regulation) antagonizes HSPB1 phosphorylation, consequently it prevents G-actin sequestration by phosphorylated HSPB1, allowing F-actin polymerization. Hence enhances the velocity of cell migration and stimulates directed cell migration by PTEN-modulated polarization. The chain is Insulin-like growth factor 2 mRNA-binding protein 1 (IGF2BP1) from Gallus gallus (Chicken).